A 243-amino-acid polypeptide reads, in one-letter code: Adenylate dimethylallyltransferase (243 aa).

It carries out the reaction dimethylallyl diphosphate + AMP = N(6)-(dimethylallyl)adenosine 5'-phosphate + diphosphate. Its function is as follows. Transfers dimethylallyl groups to AMP as part of the biosynthesis of cytokinin phytohormones. This chain is Adenylate dimethylallyltransferase (tzs), found in Agrobacterium fabrum (strain C58 / ATCC 33970) (Agrobacterium tumefaciens (strain C58)).